A 343-amino-acid chain; its full sequence is HTH-type transcriptional regulator GntR (343 aa).

Residues 16-70 (PTLNEVARRAGVSPITASRALRGVASVAEELAQKVRDAARELGYVANPAARALAS) enclose the HTH lacI-type domain. A DNA-binding region (H-T-H motif) is located at residues 18-37 (LNEVARRAGVSPITASRALR).

Its activity is regulated as follows. Free GntR fails to recognize gluconate and 6-phosphogluconate, whereas the GntR/DNA complexes recognize both ligands. It is therefore likely that GntR DNA binding induces structural changes that permit GntR to recognize effectors. In terms of biological role, involved in the regulation of glucose metabolism. Represses its own expression as well as that of the gluconate permease GntP. It employs an effector mediated de-repression mechanism: in the absence of ligand, GntR binds to the gntR and gntP promoters and represses their expression. The release of promoter bound GntR is induced by gluconate and 6-phosphogluconate that bind with similar apparent affinities to the GntR/DNA complex. The release of GntR leads to transcription of the genes. In Pseudomonas aeruginosa (strain ATCC 15692 / DSM 22644 / CIP 104116 / JCM 14847 / LMG 12228 / 1C / PRS 101 / PAO1), this protein is HTH-type transcriptional regulator GntR.